The following is an 882-amino-acid chain: MGCLGNQLLIAILLLSVYGIYCIQYVTVFYGVPAWRNATIPLFCATKNRDTWGTTQCLPDNDDYSELALNVTESFDAWENTVTEQAIEDVWQLFETSIKPCVKLSPLCITMRCNKSETDKWGLTKSSTTTASTTTTTTAKSVETRDIVNETSPCVVHDNCTGLEQEPMISCKFNMTGLKRDKKKEYNETWYSADLVCEQGNSTGNESRCYMNHCNTSVIQECCDKDYWDAIRCRYCAPPGYALLRCNDTNYSGFMPNCSKVVVSSCTRMMETQTSTWFRFNGTRAENRTYIYWHGRDNRTIISLNKHYNLTMKCRRPGNKTVLPVTIMSALVFHSQPVNERPKQAWCRFGGNWKEAIKEVKQTIVKHPRYTGTNNTDKINLTAPRGGDPEVTFMWTNCRGEFLYCKMNWFLNWVEDRSLTTQKPKERHKRNYVPCHIRQIINTWHKVGKNVYLPPREGDLTCNSTVTSLIANINWTDGNQTSITMSAEVAELYRLELGDYKLVEITPIGLAPTNVKRYTTGGTSRNKRGVFVLGFLGFLATAGSAMGAASLTVTAQSRTLLAGIVQQQQQLLDVVKRQQELLRLTVWGTKNLQTRVSAIEKYLKDQAQLNAWGCAFRQVCHTTVPWPNASLTPDWNNETWQEWERKVDFLEANITALLEEAQIQQEKNMYELQKLNSWDVFGNWFDLTSWIKYIQYGIYIIVGVILLRIVIYIVQMLARLRQGYRPVFSSPPSYFQXTHTQQDPALPTKEGKKGDGGGSGGNSSWPWQIEYIHFLIRQLIRLLTWLFSNCRTLLSRAYQILQPIFQRLSATLRRIREVLRLELTYLQYGWSYFQEAVQAAQRSATETLAGAWGELWEALQRGGRWILAIPRRIRQGLELTLL.

An N-terminal signal peptide occupies residues M1–C22. Residues I23–G697 lie on the Extracellular side of the membrane. N-linked (GlcNAc...) asparagine; by host glycosylation is present at N37. C44 and C57 are joined by a disulfide. N-linked (GlcNAc...) asparagine; by host glycans are attached at residues N70, N114, N149, N159, N174, N187, N201, N205, N215, N247, N250, N257, N281, N287, N298, N309, N319, N374, and N380. Intrachain disulfides connect C101-C223, C108-C214, C113-C171, C236-C266, and C246-C258. The tract at residues C113–S170 is V1. The V2 stretch occupies residues C171 to C214. Positions C314–W346 are V3. A disulfide bridge connects residues C314 and C347. 2 disulfides stabilise this stretch: C398–C462 and C405–C435. The interval C405–C435 is V4. 3 N-linked (GlcNAc...) asparagine; by host glycosylation sites follow: N463, N474, and N479. The V5 stretch occupies residues G478 to M485. The interval G529–A549 is fusion peptide. Positions L592–Q608 are immunosuppression. N-linked (GlcNAc...) asparagine; by host glycans are attached at residues N628, N637, and N653. The stretch at N637–M669 forms a coiled coil. Positions K674–Q695 are MPER; binding to GalCer. Residues I698 to A718 traverse the membrane as a helical segment. Topologically, residues R719–L882 are cytoplasmic. The YXXV motif; contains endocytosis signal motif lies at Y724 to V727. A disordered region spans residues T738–G761. C790 carries S-palmitoyl cysteine; by host lipidation. The short motif at L881–L882 is the Di-leucine internalization motif element.

In terms of assembly, the mature envelope protein (Env) consists of a homotrimer of non-covalently associated gp120-gp41 heterodimers. The resulting complex protrudes from the virus surface as a spike. Interacts with host CD4 and CCR5. Gp120 also interacts with the C-type lectins CD209/DC-SIGN and CLEC4M/DC-SIGNR (collectively referred to as DC-SIGN(R)). As to quaternary structure, the mature envelope protein (Env) consists of a homotrimer of non-covalently associated gp120-gp41 heterodimers. The resulting complex protrudes from the virus surface as a spike. Post-translationally, specific enzymatic cleavages in vivo yield mature proteins. Envelope glycoproteins are synthesized as an inactive precursor that is heavily N-glycosylated and processed likely by host cell furin in the Golgi to yield the mature SU and TM proteins. The cleavage site between SU and TM requires the minimal sequence [KR]-X-[KR]-R. In terms of processing, palmitoylation of the transmembrane protein and of Env polyprotein (prior to its proteolytic cleavage) is essential for their association with host cell membrane lipid rafts. Palmitoylation is therefore required for envelope trafficking to classical lipid rafts, but not for viral replication.

Its subcellular location is the virion membrane. The protein resides in the host cell membrane. It localises to the host endosome membrane. In terms of biological role, the surface protein gp120 (SU) attaches the virus to the host lymphoid cell by binding to the primary receptor CD4. This interaction induces a structural rearrangement creating a high affinity binding site for a chemokine coreceptor like CCR5. This peculiar 2 stage receptor-interaction strategy allows gp120 to maintain the highly conserved coreceptor-binding site in a cryptic conformation, protected from neutralizing antibodies. These changes are transmitted to the transmembrane protein gp41 and are thought to activate its fusogenic potential by unmasking its fusion peptide. Functionally, surface protein gp120 (SU) may target the virus to gut-associated lymphoid tissue (GALT) by binding host ITGA4/ITGB7 (alpha-4/beta-7 integrins), a complex that mediates T-cell migration to the GALT. Interaction between gp120 and ITGA4/ITGB7 would allow the virus to enter GALT early in the infection, infecting and killing most of GALT's resting CD4+ T-cells. This T-cell depletion is believed to be the major insult to the host immune system leading to AIDS. Its function is as follows. The surface protein gp120 is a ligand for CD209/DC-SIGN and CLEC4M/DC-SIGNR, which are respectively found on dendritic cells (DCs), and on endothelial cells of liver sinusoids and lymph node sinuses. These interactions allow capture of viral particles at mucosal surfaces by these cells and subsequent transmission to permissive cells. DCs are professional antigen presenting cells, critical for host immunity by inducing specific immune responses against a broad variety of pathogens. They act as sentinels in various tissues where they take up antigen, process it, and present it to T-cells following migration to lymphoid organs. SIV subverts the migration properties of dendritic cells to gain access to CD4+ T-cells in lymph nodes. Virus transmission to permissive T-cells occurs either in trans (without DCs infection, through viral capture and transmission), or in cis (following DCs productive infection, through the usual CD4-gp120 interaction), thereby inducing a robust infection. In trans infection, bound virions remain infectious over days and it is proposed that they are not degraded, but protected in non-lysosomal acidic organelles within the DCs close to the cell membrane thus contributing to the viral infectious potential during DCs' migration from the periphery to the lymphoid tissues. On arrival at lymphoid tissues, intact virions recycle back to DCs' cell surface allowing virus transmission to CD4+ T-cells. Virion capture also seems to lead to MHC-II-restricted viral antigen presentation, and probably to the activation of SIV-specific CD4+ cells. The transmembrane protein gp41 (TM) acts as a class I viral fusion protein. Under the current model, the protein has at least 3 conformational states: pre-fusion native state, pre-hairpin intermediate state, and post-fusion hairpin state. During fusion of viral and target intracellular membranes, the coiled coil regions (heptad repeats) assume a trimer-of-hairpins structure, positioning the fusion peptide in close proximity to the C-terminal region of the ectodomain. The formation of this structure appears to drive apposition and subsequent fusion of viral and target cell membranes. Complete fusion occurs in host cell endosomes. The virus undergoes clathrin-dependent internalization long before endosomal fusion, thus minimizing the surface exposure of conserved viral epitopes during fusion and reducing the efficacy of inhibitors targeting these epitopes. Membranes fusion leads to delivery of the nucleocapsid into the cytoplasm. In terms of biological role, the envelope glycoprotein gp160 precursor down-modulates cell surface CD4 antigen by interacting with it in the endoplasmic reticulum and blocking its transport to the cell surface. Functionally, the gp120-gp41 heterodimer allows rapid transcytosis of the virus through CD4 negative cells such as simple epithelial monolayers of the intestinal, rectal and endocervical epithelial barriers. Both gp120 and gp41 specifically recognize glycosphingolipids galactosyl-ceramide (GalCer) or 3' sulfo-galactosyl-ceramide (GalS) present in the lipid rafts structures of epithelial cells. Binding to these alternative receptors allows the rapid transcytosis of the virus through the epithelial cells. This transcytotic vesicle-mediated transport of virions from the apical side to the basolateral side of the epithelial cells does not involve infection of the cells themselves. This chain is Envelope glycoprotein gp160 (env), found in Simian immunodeficiency virus (isolate Mm142-83) (SIV-mac).